The following is a 287-amino-acid chain: Elongation factor Ts (287 aa).

The interval 80–83 (TDFL) is involved in Mg(2+) ion dislocation from EF-Tu.

This sequence belongs to the EF-Ts family.

The protein resides in the cytoplasm. In terms of biological role, associates with the EF-Tu.GDP complex and induces the exchange of GDP to GTP. It remains bound to the aminoacyl-tRNA.EF-Tu.GTP complex up to the GTP hydrolysis stage on the ribosome. In Pseudomonas syringae pv. syringae (strain B728a), this protein is Elongation factor Ts.